We begin with the raw amino-acid sequence, 282 residues long: uncharacterized protein (282 aa).

Residues 5 to 140 (DELIKLHEEH…SFQPYTKKLD (136 aa)) enclose the N-acetyltransferase domain.

It belongs to the acetyltransferase family.

This is an uncharacterized protein from Bacillus subtilis (strain 168).